Here is a 745-residue protein sequence, read N- to C-terminus: Copper-transporting ATPase (745 aa).

The HMA domain maps to 1 to 67 (MKESFYIEGM…LIEKLGYSPK (67 aa)). At 1–83 (MKESFYIEGM…KKEFFSPNVK (83 aa)) the chain is on the cytoplasmic side. Cu cation-binding residues include Cys12 and Cys15. Residues 84 to 104 (LALAVIFTLFVVYLSMGAMLS) traverse the membrane as a helical segment. Residues 105–124 (PSLLPESLLAIDNHSNFLNA) are Extracellular-facing. A helical membrane pass occupies residues 125-144 (CLQLIGALIVMHLGRDFYIQ). Residues 145 to 151 (GFKALWH) lie on the Cytoplasmic side of the membrane. A helical membrane pass occupies residues 152 to 172 (RQPNMSSLIAIGTSAALISSL). Topologically, residues 173 to 194 (WQLYLVYTNHYTDQWSYGHYYF) are extracellular. The chain crosses the membrane as a helical span at residues 195–215 (ESVCVILMFVMVGKRIENVSK). The Cytoplasmic portion of the chain corresponds to 216–343 (DKALDAMQAL…KAEISRLADK (128 aa)). A helical transmembrane segment spans residues 344-366 (VSSVFVPSVIAISILAFVVWLII). Residues 367–379 (APKPDFWWNFGIA) lie on the Extracellular side of the membrane. A helical membrane pass occupies residues 380-397 (LEVFVSVLVISCPCALGL). Topologically, residues 398–685 (ATPMSILVAN…KLSQATIKNI (288 aa)) are cytoplasmic. The active-site 4-aspartylphosphate intermediate is Asp435. Mg(2+) is bound by residues Asp631 and Asp635. A helical transmembrane segment spans residues 686–705 (KENLFWAFCYNSVFIPLACG). The Extracellular portion of the chain corresponds to 706–716 (VLYKANLMLSP). The chain crosses the membrane as a helical span at residues 717–735 (AIAGLAMSLSSVSVVLNSQ). The Cytoplasmic portion of the chain corresponds to 736–745 (RLRNFKIKDH).

Belongs to the cation transport ATPase (P-type) (TC 3.A.3) family. Type IB subfamily.

It is found in the cell membrane. The enzyme catalyses Cu(2+)(in) + ATP + H2O = Cu(2+)(out) + ADP + phosphate + H(+). Probably involved in copper export. The sequence is that of Copper-transporting ATPase (copA) from Helicobacter pylori (strain ATCC 700392 / 26695) (Campylobacter pylori).